The chain runs to 326 residues: MSTKIAVLGGGAWGTALAAMAAKGGHESWLYARDAETVVAINKDRRNPCYLGDITLADGIRASTDAAAVVTGADAVLAVIPAQAMRNGLSELGTLIPQASPIVLCAKGIEQNTGRLMSEVVAEILPDHRIAALSGPSFASDVARGLPTAVTVACEDANTADRLAALLSGPAFRCYSTTDLKGVETGGALKNVLAIAAGAAIGRGYGASAQAALVTRGFAELRRIGQAMSARPETIMGLSGLGDLMLTCSSSQSRNYSYGLALGRGEDLTSRPLAEGVATAPIAAELCRKHNISAPIIDAVGALLDGKITIDEAVTALLNRPLKTED.

NADPH is bound by residues Trp-13, Arg-33, and Lys-107. Lys-107, Gly-135, and Ser-137 together coordinate sn-glycerol 3-phosphate. Ala-139 provides a ligand contact to NADPH. 5 residues coordinate sn-glycerol 3-phosphate: Lys-190, Asp-243, Ser-253, Arg-254, and Asn-255. Catalysis depends on Lys-190, which acts as the Proton acceptor. Arg-254 is an NADPH binding site. NADPH is bound by residues Leu-273 and Glu-275.

The protein belongs to the NAD-dependent glycerol-3-phosphate dehydrogenase family.

The protein resides in the cytoplasm. The enzyme catalyses sn-glycerol 3-phosphate + NAD(+) = dihydroxyacetone phosphate + NADH + H(+). It carries out the reaction sn-glycerol 3-phosphate + NADP(+) = dihydroxyacetone phosphate + NADPH + H(+). It participates in membrane lipid metabolism; glycerophospholipid metabolism. Catalyzes the reduction of the glycolytic intermediate dihydroxyacetone phosphate (DHAP) to sn-glycerol 3-phosphate (G3P), the key precursor for phospholipid synthesis. The chain is Glycerol-3-phosphate dehydrogenase [NAD(P)+] from Brucella ovis (strain ATCC 25840 / 63/290 / NCTC 10512).